Here is a 273-residue protein sequence, read N- to C-terminus: Bis(5'-nucleosyl)-tetraphosphatase, symmetrical (273 aa).

It belongs to the Ap4A hydrolase family.

It catalyses the reaction P(1),P(4)-bis(5'-adenosyl) tetraphosphate + H2O = 2 ADP + 2 H(+). Hydrolyzes diadenosine 5',5'''-P1,P4-tetraphosphate to yield ADP. The polypeptide is Bis(5'-nucleosyl)-tetraphosphatase, symmetrical (Aromatoleum aromaticum (strain DSM 19018 / LMG 30748 / EbN1) (Azoarcus sp. (strain EbN1))).